A 300-amino-acid polypeptide reads, in one-letter code: Ribosomal protein L11 methyltransferase (300 aa).

S-adenosyl-L-methionine-binding residues include threonine 152, glycine 173, aspartate 195, and asparagine 234.

This sequence belongs to the methyltransferase superfamily. PrmA family.

It localises to the cytoplasm. It carries out the reaction L-lysyl-[protein] + 3 S-adenosyl-L-methionine = N(6),N(6),N(6)-trimethyl-L-lysyl-[protein] + 3 S-adenosyl-L-homocysteine + 3 H(+). Its function is as follows. Methylates ribosomal protein L11. In Paraburkholderia phymatum (strain DSM 17167 / CIP 108236 / LMG 21445 / STM815) (Burkholderia phymatum), this protein is Ribosomal protein L11 methyltransferase.